The sequence spans 76 residues: Small ribosomal subunit protein bS18 (76 aa).

It belongs to the bacterial ribosomal protein bS18 family. As to quaternary structure, part of the 30S ribosomal subunit. Forms a tight heterodimer with protein bS6.

Its function is as follows. Binds as a heterodimer with protein bS6 to the central domain of the 16S rRNA, where it helps stabilize the platform of the 30S subunit. This is Small ribosomal subunit protein bS18 from Pelotomaculum thermopropionicum (strain DSM 13744 / JCM 10971 / SI).